We begin with the raw amino-acid sequence, 431 residues long: UDP-N-acetylglucosamine 1-carboxyvinyltransferase (431 aa).

Residue 22-23 (KN) coordinates phosphoenolpyruvate. Residue R102 coordinates UDP-N-acetyl-alpha-D-glucosamine. C126 functions as the Proton donor in the catalytic mechanism. C126 is modified (2-(S-cysteinyl)pyruvic acid O-phosphothioketal). 2 residues coordinate UDP-N-acetyl-alpha-D-glucosamine: D318 and I340.

It belongs to the EPSP synthase family. MurA subfamily.

The protein localises to the cytoplasm. The enzyme catalyses phosphoenolpyruvate + UDP-N-acetyl-alpha-D-glucosamine = UDP-N-acetyl-3-O-(1-carboxyvinyl)-alpha-D-glucosamine + phosphate. The protein operates within cell wall biogenesis; peptidoglycan biosynthesis. In terms of biological role, cell wall formation. Adds enolpyruvyl to UDP-N-acetylglucosamine. In Bartonella quintana (strain Toulouse) (Rochalimaea quintana), this protein is UDP-N-acetylglucosamine 1-carboxyvinyltransferase.